The primary structure comprises 274 residues: tRNA pseudouridine synthase A (274 aa).

Residue Asp-51 is the Nucleophile of the active site. Tyr-109 lines the substrate pocket.

Belongs to the tRNA pseudouridine synthase TruA family. Homodimer.

It carries out the reaction uridine(38/39/40) in tRNA = pseudouridine(38/39/40) in tRNA. Its function is as follows. Formation of pseudouridine at positions 38, 39 and 40 in the anticodon stem and loop of transfer RNAs. The chain is tRNA pseudouridine synthase A from Acidovorax sp. (strain JS42).